The sequence spans 313 residues: 4-hydroxy-3-methylbut-2-enyl diphosphate reductase (313 aa).

Cys-20 provides a ligand contact to [4Fe-4S] cluster. (2E)-4-hydroxy-3-methylbut-2-enyl diphosphate-binding residues include His-49 and His-82. Residues His-49 and His-82 each coordinate dimethylallyl diphosphate. Isopentenyl diphosphate contacts are provided by His-49 and His-82. Position 104 (Cys-104) interacts with [4Fe-4S] cluster. His-132 serves as a coordination point for (2E)-4-hydroxy-3-methylbut-2-enyl diphosphate. His-132 contacts dimethylallyl diphosphate. His-132 is a binding site for isopentenyl diphosphate. The active-site Proton donor is Glu-134. Position 172 (Thr-172) interacts with (2E)-4-hydroxy-3-methylbut-2-enyl diphosphate. A [4Fe-4S] cluster-binding site is contributed by Cys-201. (2E)-4-hydroxy-3-methylbut-2-enyl diphosphate is bound by residues Ser-229, Ser-230, Asn-231, and Ser-273. Ser-229, Ser-230, Asn-231, and Ser-273 together coordinate dimethylallyl diphosphate. Isopentenyl diphosphate is bound by residues Ser-229, Ser-230, Asn-231, and Ser-273.

It belongs to the IspH family. [4Fe-4S] cluster serves as cofactor.

It carries out the reaction isopentenyl diphosphate + 2 oxidized [2Fe-2S]-[ferredoxin] + H2O = (2E)-4-hydroxy-3-methylbut-2-enyl diphosphate + 2 reduced [2Fe-2S]-[ferredoxin] + 2 H(+). The catalysed reaction is dimethylallyl diphosphate + 2 oxidized [2Fe-2S]-[ferredoxin] + H2O = (2E)-4-hydroxy-3-methylbut-2-enyl diphosphate + 2 reduced [2Fe-2S]-[ferredoxin] + 2 H(+). The protein operates within isoprenoid biosynthesis; dimethylallyl diphosphate biosynthesis; dimethylallyl diphosphate from (2E)-4-hydroxy-3-methylbutenyl diphosphate: step 1/1. It functions in the pathway isoprenoid biosynthesis; isopentenyl diphosphate biosynthesis via DXP pathway; isopentenyl diphosphate from 1-deoxy-D-xylulose 5-phosphate: step 6/6. Functionally, catalyzes the conversion of 1-hydroxy-2-methyl-2-(E)-butenyl 4-diphosphate (HMBPP) into a mixture of isopentenyl diphosphate (IPP) and dimethylallyl diphosphate (DMAPP). Acts in the terminal step of the DOXP/MEP pathway for isoprenoid precursor biosynthesis. This Desulfotalea psychrophila (strain LSv54 / DSM 12343) protein is 4-hydroxy-3-methylbut-2-enyl diphosphate reductase.